The chain runs to 428 residues: AP2-like ethylene-responsive transcription factor At2g41710 (428 aa).

Over residues 1-10 the composition is skewed to polar residues; the sequence is MASVSSSDQG. Positions 1 to 28 are disordered; that stretch reads MASVSSSDQGPKTEAGCSGGGGGESSET. Positions 70 to 136 form a DNA-binding region, AP2/ERF; that stretch reads IYRGVTRHRW…WGPGTLINFP (67 aa).

It belongs to the AP2/ERF transcription factor family. AP2 subfamily.

It localises to the nucleus. Probably acts as a transcriptional activator. Binds to the GCC-box pathogenesis-related promoter element. May be involved in the regulation of gene expression by stress factors and by components of stress signal transduction pathways. The chain is AP2-like ethylene-responsive transcription factor At2g41710 from Arabidopsis thaliana (Mouse-ear cress).